Reading from the N-terminus, the 163-residue chain is CDP-archaeol synthase (163 aa).

The next 5 helical transmembrane spans lie at 4 to 24, 52 to 72, 75 to 95, 107 to 127, and 128 to 148; these read LLLG…APFI, LLLS…FLGI, IIIG…GAFI, APIL…ISFN, and VNLN…LHMF.

It belongs to the CDP-archaeol synthase family. It depends on Mg(2+) as a cofactor.

It is found in the cell membrane. It catalyses the reaction 2,3-bis-O-(geranylgeranyl)-sn-glycerol 1-phosphate + CTP + H(+) = CDP-2,3-bis-O-(geranylgeranyl)-sn-glycerol + diphosphate. It functions in the pathway membrane lipid metabolism; glycerophospholipid metabolism. Catalyzes the formation of CDP-2,3-bis-(O-geranylgeranyl)-sn-glycerol (CDP-archaeol) from 2,3-bis-(O-geranylgeranyl)-sn-glycerol 1-phosphate (DGGGP) and CTP. This reaction is the third ether-bond-formation step in the biosynthesis of archaeal membrane lipids. In Sulfolobus acidocaldarius (strain ATCC 33909 / DSM 639 / JCM 8929 / NBRC 15157 / NCIMB 11770), this protein is CDP-archaeol synthase.